Here is a 63-residue protein sequence, read N- to C-terminus: MKMWGPSQRDSFREITYKVKFKYDDGDYSLAIDLMSRDCINVYELITDRLLVDFLSKKLLKLR.

This is an uncharacterized protein from Saccharomyces cerevisiae (strain ATCC 204508 / S288c) (Baker's yeast).